The primary structure comprises 293 residues: Acetyl-coenzyme A carboxylase carboxyl transferase subunit beta (293 aa).

Residues 29–293 (LWSKCPECGQ…GCKPMELTSA (265 aa)) form the CoA carboxyltransferase N-terminal domain. Positions 33, 36, 52, and 55 each coordinate Zn(2+). The C4-type zinc finger occupies 33–55 (CPECGQVVYLKDLKLNASVCANC).

Belongs to the AccD/PCCB family. Acetyl-CoA carboxylase is a heterohexamer composed of biotin carboxyl carrier protein (AccB), biotin carboxylase (AccC) and two subunits each of ACCase subunit alpha (AccA) and ACCase subunit beta (AccD). Zn(2+) is required as a cofactor.

Its subcellular location is the cytoplasm. The enzyme catalyses N(6)-carboxybiotinyl-L-lysyl-[protein] + acetyl-CoA = N(6)-biotinyl-L-lysyl-[protein] + malonyl-CoA. The protein operates within lipid metabolism; malonyl-CoA biosynthesis; malonyl-CoA from acetyl-CoA: step 1/1. Functionally, component of the acetyl coenzyme A carboxylase (ACC) complex. Biotin carboxylase (BC) catalyzes the carboxylation of biotin on its carrier protein (BCCP) and then the CO(2) group is transferred by the transcarboxylase to acetyl-CoA to form malonyl-CoA. This Synechococcus sp. (strain CC9605) protein is Acetyl-coenzyme A carboxylase carboxyl transferase subunit beta.